Here is a 168-residue protein sequence, read N- to C-terminus: Cell division inhibitor SulA (168 aa).

A ftsZ binding region spans residues 106–112 (ALLTGNY). The tract at residues 161–168 (KIHSSLYH) is lon protease binding.

Belongs to the SulA family. In terms of assembly, interacts with FtsZ. Post-translationally, is rapidly cleaved and degraded by the Lon protease once DNA damage is repaired.

Functionally, component of the SOS system and an inhibitor of cell division. Accumulation of SulA causes rapid cessation of cell division and the appearance of long, non-septate filaments. In the presence of GTP, binds a polymerization-competent form of FtsZ in a 1:1 ratio, thus inhibiting FtsZ polymerization and therefore preventing it from participating in the assembly of the Z ring. This mechanism prevents the premature segregation of damaged DNA to daughter cells during cell division. This Yersinia enterocolitica serotype O:8 / biotype 1B (strain NCTC 13174 / 8081) protein is Cell division inhibitor SulA.